A 391-amino-acid chain; its full sequence is tRNA-specific 2-thiouridylase MnmA (391 aa).

Residues 9 to 16 (GMSGGVDS) and methionine 35 contribute to the ATP site. The segment at 95–97 (NPD) is interaction with target base in tRNA. The active-site Nucleophile is cysteine 100. Cysteines 100 and 196 form a disulfide. Glycine 124 provides a ligand contact to ATP. The segment at 146 to 148 (KDQ) is interaction with tRNA. Catalysis depends on cysteine 196, which acts as the Cysteine persulfide intermediate. The interval 308-309 (RY) is interaction with tRNA.

The protein belongs to the MnmA/TRMU family.

It is found in the cytoplasm. It catalyses the reaction S-sulfanyl-L-cysteinyl-[protein] + uridine(34) in tRNA + AH2 + ATP = 2-thiouridine(34) in tRNA + L-cysteinyl-[protein] + A + AMP + diphosphate + H(+). Functionally, catalyzes the 2-thiolation of uridine at the wobble position (U34) of tRNA, leading to the formation of s(2)U34. The protein is tRNA-specific 2-thiouridylase MnmA of Burkholderia orbicola (strain MC0-3).